We begin with the raw amino-acid sequence, 57 residues long: Three-finger toxin Tschuditoxin-I (57 aa).

Disulfide bonds link Cys3–Cys22, Cys17–Cys39, and Cys41–Cys52.

Expressed by the venom gland.

It is found in the secreted. Produces peripheral paralysis by blocking neuromuscular transmission at the postsynaptic site. Binds to and inhibits the endogenous nicotinic acetylcholine receptors (nAChR). This neurotoxin is lethal to mice by intraperitoneal or intravenous injection. The polypeptide is Three-finger toxin Tschuditoxin-I (Micrurus tschudii (Desert coral snake)).